The chain runs to 77 residues: Secapin (77 aa).

Residues 1 to 32 (MKNYSKNATHLITVLLFSFVVILLIIPSKCEA) form the signal peptide. The propeptide occupies 33 to 52 (VSNDMQPLEARSADLVPEPR). C61 and C72 are oxidised to a cystine.

This sequence belongs to the secapin family. In terms of tissue distribution, expressed by the venom gland.

The protein resides in the secreted. Functionally, serine protease inhibitor which exhibits antifibrinolytic, antielastolytic and antimicrobial activities. Displays antimicrobial activity against bacteria and fungi. Likely functions in the innate immune response to microbial infection and possibly in the venom, as an antifibrinolytic agent. Not toxic to mice but does induce slight sedation at higher doses (from 40 mg/kg). At a dose of 80 mg/kg, sedation occurs 15 minutes after injection and is accompanied by piloerection and hypothermia. The sequence is that of Secapin from Apis mellifera (Honeybee).